Consider the following 237-residue polypeptide: Ribosomal RNA small subunit methyltransferase G (237 aa).

S-adenosyl-L-methionine is bound by residues Gly-78, Phe-83, 129-130, and Arg-148; that span reads AE.

This sequence belongs to the methyltransferase superfamily. RNA methyltransferase RsmG family.

It localises to the cytoplasm. Its function is as follows. Specifically methylates the N7 position of a guanine in 16S rRNA. This chain is Ribosomal RNA small subunit methyltransferase G, found in Streptococcus pyogenes serotype M2 (strain MGAS10270).